The following is a 128-amino-acid chain: Small ribosomal subunit protein uS13 (128 aa).

A disordered region spans residues 98–128 (VRGQRTRTNARTRKGPRPRIGVKKKGKQAGS). Over residues 101–128 (QRTRTNARTRKGPRPRIGVKKKGKQAGS) the composition is skewed to basic residues.

This sequence belongs to the universal ribosomal protein uS13 family. As to quaternary structure, part of the 30S ribosomal subunit. Forms a loose heterodimer with protein S19. Forms two bridges to the 50S subunit in the 70S ribosome.

In terms of biological role, located at the top of the head of the 30S subunit, it contacts several helices of the 16S rRNA. In the 70S ribosome it contacts the 23S rRNA (bridge B1a) and protein L5 of the 50S subunit (bridge B1b), connecting the 2 subunits; these bridges are implicated in subunit movement. Contacts the tRNAs in the A and P-sites. This chain is Small ribosomal subunit protein uS13, found in Thermomicrobium roseum (strain ATCC 27502 / DSM 5159 / P-2).